The chain runs to 227 residues: uncharacterized protein (227 aa).

This sequence to ORF5 in pFZ1.

This is an uncharacterized protein from Methanothermobacter thermautotrophicus (Methanobacterium thermoformicicum).